The chain runs to 643 residues: Conglutin alpha 2 (643 aa).

The signal sequence occupies residues 1–22; it reads MAKPCLFSFSLCLLLLSSLCLA. 2 disulfides stabilise this stretch: Cys-31-Cys-64 and Cys-107-Cys-464. Positions 36-261 constitute a Cupin type-1 1 domain; the sequence is LNALEPDNRV…AFNVDEEIIN (226 aa). Disordered stretches follow at residues 110 to 142, 190 to 243, and 285 to 458; these read TYEE…DSHQ, PRRF…VLSG, and PKSQ…SRNG. The segment covering 207-218 has biased composition (low complexity); sequence QEQQGQQREQQQ. Composition is skewed to basic and acidic residues over residues 228-237 and 298-313; these read HQQEQEEEGK and PRQR…RREE. Positions 314 to 323 are enriched in acidic residues; it reads EKEEEEEEDE. 2 stretches are compositionally biased toward basic and acidic residues: residues 324–333 and 357–369; these read PRSRERYERQ and QEGR…WERT. The segment covering 422–433 has biased composition (basic residues); the sequence is RGRHGGRGRRSG. Positions 470 to 616 constitute a Cupin type-1 2 domain; that stretch reads ENIAKPSRAD…AFGLRLNQVS (147 aa). Residues 623–632 are compositionally biased toward polar residues; sequence NQGPLVSPQS. Residues 623-643 form a disordered region; that stretch reads NQGPLVSPQSESEDHTLPKVA. Over residues 634-643 the composition is skewed to basic and acidic residues; sequence SEDHTLPKVA.

The protein belongs to the 11S seed storage protein (globulins) family. Hexamer; each subunit is composed of an acidic and a basic chain derived from a single precursor and linked by a disulfide bond. Component of globulins complexes which accumulate in seeds.

Functionally, sulfur-rich seed storage protein. This protein found in the seeds of many leguminous and non-leguminous plants is the source of sulfur-containing amino acids in seed meals. The protein is Conglutin alpha 2 of Lupinus angustifolius (Narrow-leaved blue lupine).